We begin with the raw amino-acid sequence, 603 residues long: MDTLFRLVSLHHHHHHQHAASPSPPDQPHKSYPSSRGSTSSPSSHHTHNHTYYHHSHSHYNNNSNTNYYYQGGGGGGGGYYYAEEQQPAAYLEECGNGHQFYMDEDFSSSSSSRQFHSGTGAPSSAPVPPPPSATTSSAGGHGLFEAADFSFPQVDISLDFGGSPAVPSSSGAGAGAGAAPSSSGRWAAQLLMECARAVAGRDSQRVQQLMWMLNELASPYGDVDQKLASYFLQGLFARLTTSGPRTLRTLATASDRNASFDSTRRTALKFQELSPWTPFGHVAANGAILESFLEAAAAGAAASSSSSSSSSTPPTRLHILDLSNTFCTQWPTLLEALATRSSDDTPHLSITTVVPTAAPSAAAQRVMREIGQRLEKFARLMGVPFSFRAVHHSGDLADLDLAALDLREGGATAALAVNCVNALRGVARGRDAFVASLRRLEPRVVTVVEEEADLAAPEADASSEADTDAAFVKVFGEGLRFFSAYMDSLEESFPKTSNERLSLERAVGRAIVDLVSCPASQSAERRETAASWARRMRSAGFSPAAFSEDVADDVRSLLRRYKEGWSMRDAGGATDDAAGAAAAGAFLAWKEQPVVWASAWKP.

Disordered stretches follow at residues 11–58 (HHHH…HSHS) and 106–140 (DFSS…SSAG). The span at 31–44 (SYPSSRGSTSSPSS) shows a compositional bias: low complexity. Residues 45–58 (HHTHNHTYYHHSHS) show a composition bias toward basic residues. Positions 108–125 (SSSSSSRQFHSGTGAPSS) are enriched in low complexity. The GRAS domain occupies 179–602 (AAPSSSGRWA…QPVVWASAWK (424 aa)). The leucine repeat I (LRI) stretch occupies residues 186–249 (RWAAQLLMEC…LTTSGPRTLR (64 aa)). The interval 268 to 354 (ALKFQELSPW…DTPHLSITTV (87 aa)) is VHIID. The VHIID signature appears at 318–322 (LHILD). Positions 370–406 (EIGQRLEKFARLMGVPFSFRAVHHSGDLADLDLAALD) are leucine repeat II (LRII). Residues 416-514 (LAVNCVNALR…ERAVGRAIVD (99 aa)) form a PFYRE region. The segment at 517–602 (SCPASQSAER…QPVVWASAWK (86 aa)) is SAW.

Belongs to the GRAS family. Does not interact with SCR1.

Its subcellular location is the nucleus. Functionally, putative transcription factor involved in asymmetric cell division. In Oryza sativa subsp. japonica (Rice), this protein is Protein SHORT-ROOT 2 (SHR2).